The chain runs to 102 residues: Small ribosomal subunit protein uS10 (102 aa).

This sequence belongs to the universal ribosomal protein uS10 family. Part of the 30S ribosomal subunit.

In terms of biological role, involved in the binding of tRNA to the ribosomes. The sequence is that of Small ribosomal subunit protein uS10 from Lactobacillus helveticus (strain DPC 4571).